The primary structure comprises 284 residues: Bifunctional protein FolD 1 (284 aa).

Residues 166-168 (GAS) and Ile232 contribute to the NADP(+) site.

The protein belongs to the tetrahydrofolate dehydrogenase/cyclohydrolase family. Homodimer.

It carries out the reaction (6R)-5,10-methylene-5,6,7,8-tetrahydrofolate + NADP(+) = (6R)-5,10-methenyltetrahydrofolate + NADPH. The enzyme catalyses (6R)-5,10-methenyltetrahydrofolate + H2O = (6R)-10-formyltetrahydrofolate + H(+). It participates in one-carbon metabolism; tetrahydrofolate interconversion. Functionally, catalyzes the oxidation of 5,10-methylenetetrahydrofolate to 5,10-methenyltetrahydrofolate and then the hydrolysis of 5,10-methenyltetrahydrofolate to 10-formyltetrahydrofolate. In Pseudomonas savastanoi pv. phaseolicola (strain 1448A / Race 6) (Pseudomonas syringae pv. phaseolicola (strain 1448A / Race 6)), this protein is Bifunctional protein FolD 1.